The following is a 406-amino-acid chain: MASKRLETLCKSLTREVGRISSQTGRDDYDARRKVADIARELINETTHPSDVAAQYTINMAEMACLRMFQKWKLLDKIPASGSISYEDLSASINADKNLIARMGQMLVATGKLRQTSPSHVAHTRLSTAFAHRSPPAVWFSMSFDETLVPWTQWPRYFAKYGPRQPSGQTAVPMTFAEGADGELTCYEVIARGGPERMADFADGMQGIPELMPAAGIYDFAWVGEAVAEGEVDSDMPLIVDVGGNLGQALLEIIAHTESSIPPDRCVLQDRADVIAAADALDNPVLKKVRKMPVDYHQGQPLKGALIYYVRRCLHGFTDEVSIKLLKHLTAALPADPRARVLICEQITTTPPDPYTTMMDICMMNVGSKERSEDDFTNLVTAAGMKVIKFHRGEGVATHVIECARA.

The S-adenosyl-L-methionine site is built by Asp270 and Arg312. His315 serves as the catalytic Proton acceptor.

The protein belongs to the class I-like SAM-binding methyltransferase superfamily. Cation-independent O-methyltransferase family.

The protein operates within secondary metabolite biosynthesis; flavonoid biosynthesis. Methyltransferase; part of the gene cluster that mediates the biosynthesis of chlorflavonin, a fungal flavonoid with acetolactate synthase inhibitory activity. Within the pathway, cfoD is responsible for the methylation at position C3-OH of flavonoid. The pathway begins with the PKS-NRPS hybrid synthetase cfoA that uses benzoic acid or p-hydroxybenzoic acid as a starter unit with four rounds of chain elongation using malonyl-CoA to form the chalcone skeleton. Then, a new type of chalcone isomerase, cfoK, catalyzes the conversion of the chalcone into a flavanone by a histidine-mediated oxa-Michael addition mechanism. The desaturation of flavanone to flavone is catalyzed by a new type of flavone synthase, the flavin mononucleotide (FMN)-dependent oxidoreductase cfoJ. Monooxygenases cfoF, cfoG, and P450 cfoH are responsible for the hydroxylation of the flavonoid skeleton at sites C3, C8, and C2', respectively. Like cfoF, the dehydratase cfoI also plays a role in the hydroxylation of position C3. Methyltransferases cfoB, cfoC, and cfoD then catalyze the methylation of C7-OH, C8-OH, and C3-OH, respectively. Finally, the monooxygenase cfoE is responsible for the chlorination of flavonoid at position C3'. This chain is Methyltransferase cfoD, found in Aspergillus candidus.